A 118-amino-acid chain; its full sequence is uncharacterized protein (118 aa).

Positions 1–18 (MSKLIFLFVVATLATIKA) are cleaved as a signal peptide. The N-linked (GlcNAc...) asparagine; by host glycan is linked to Asn24.

This is an uncharacterized protein from Magallana gigas (Pacific oyster).